Consider the following 425-residue polypeptide: Glucose-1-phosphate adenylyltransferase (425 aa).

Alpha-D-glucose 1-phosphate-binding positions include Tyr-114, Gly-179, 194–195 (EK), and Ser-212.

This sequence belongs to the bacterial/plant glucose-1-phosphate adenylyltransferase family. As to quaternary structure, homotetramer.

It carries out the reaction alpha-D-glucose 1-phosphate + ATP + H(+) = ADP-alpha-D-glucose + diphosphate. The protein operates within glycan biosynthesis; glycogen biosynthesis. Its function is as follows. Involved in the biosynthesis of ADP-glucose, a building block required for the elongation reactions to produce glycogen. Catalyzes the reaction between ATP and alpha-D-glucose 1-phosphate (G1P) to produce pyrophosphate and ADP-Glc. This is Glucose-1-phosphate adenylyltransferase from Pectobacterium carotovorum subsp. carotovorum (strain PC1).